A 173-amino-acid chain; its full sequence is MDIAIQHPWFKRALGPFYPSRLFDQFFGEGLFEYDLLPFLSSTISPYYRQSLFRTVLDSGISEVRSDRDKFVIFLDVKHFSPEDLTVKVQEDFVEIHGKHNERQDDHGYISREFHRRYRLPSNVDQSALSCSLSADGMLTFSGPKVPSGVDAGHSERAIPVSREEKPSSAPSS.

Met1 is modified (N-acetylmethionine). The tract at residues Met1–Glu63 is required for complex formation with BFSP1 and BFSP2. Gln6 is subject to Deamidated glutamine; partial. At Ser45 the chain carries Phosphoserine. Deamidated glutamine; partial is present on Gln50. Positions Leu52–Ser162 constitute a sHSP domain. Lys70 carries the post-translational modification N6-acetyllysine. The residue at position 90 (Gln90) is a Deamidated glutamine; partial. Lys99 carries the N6-acetyllysine modification. His100 contacts Zn(2+). Position 101 is a deamidated asparagine; partial (Asn101). The Zn(2+) site is built by Glu102 and His107. Ser122 is subject to Phosphoserine. A Deamidated asparagine; partial modification is found at Asn123. Residues Pro144 to Ser173 are disordered. Residues Gly153–Pro167 show a composition bias toward basic and acidic residues. Zn(2+) is bound at residue His154. Ser162 carries O-linked (GlcNAc) serine glycosylation.

It belongs to the small heat shock protein (HSP20) family. As to quaternary structure, heteromer composed of three CRYAA and one CRYAB subunits. Inter-subunit bridging via zinc ions enhances stability, which is crucial as there is no protein turn over in the lens. Can also form homodimers and homotetramers (dimers of dimers) which serve as the building blocks of homooligomers. Within homooligomers, the zinc-binding motif is created from residues of 3 different molecules. His-100 and Glu-102 from one molecule are ligands of the zinc ion, and His-107 and His-154 residues from additional molecules complete the site with tetrahedral coordination geometry. Part of a complex required for lens intermediate filament formation composed of BFSP1, BFSP2 and CRYAA. Post-translationally, acetylation at Lys-70 may increase chaperone activity. In terms of processing, undergoes age-dependent proteolytical cleavage at the C-terminus.

It is found in the cytoplasm. The protein localises to the nucleus. In terms of biological role, contributes to the transparency and refractive index of the lens. Acts as a chaperone, preventing aggregation of various proteins under a wide range of stress conditions. Required for the correct formation of lens intermediate filaments as part of a complex composed of BFSP1, BFSP2 and CRYAA. This chain is Alpha-crystallin A chain (CRYAA), found in Pteropus poliocephalus (Grey-headed flying fox).